The sequence spans 143 residues: Protein RJ1 (143 aa).

An N-terminal signal peptide occupies residues 1 to 26 (MARVMTRGMARVSTLATVRVSTLARA).

The chain is Protein RJ1 (RJ1) from Human herpesvirus 6A (strain Uganda-1102) (HHV-6 variant A).